The sequence spans 366 residues: Inhibin alpha chain (366 aa).

A signal peptide spans 1–20; that stretch reads MVIQPSLLLLLLLTLQDVDS. A propeptide spanning residues 21–63 is cleaved from the precursor; sequence CQGPELVRELVLAKVKALFLDALGPPAMDGEGGGPGIRRLPRR. The propeptide at 64–233 is inhibin alpha N-terminal region; that stretch reads HALGGFMHRT…APSAGERARR (170 aa). N-linked (GlcNAc...) asparagine glycosylation is found at N147 and N269. 3 disulfide bridges follow: C263–C328, C292–C363, and C296–C365.

It belongs to the TGF-beta family. Dimeric, linked by one or more disulfide bonds. Activin B is a dimer of alpha and beta-B. Inhibin A is a dimer of alpha and beta-A. Inhibin B is a dimer of alpha and beta-B. Interacts with TGFBR3L; this interaction regulates female fertility. In terms of processing, proteolytic processing yields a number of bioactive forms, consisting either solely of the mature alpha chain, of the most N-terminal propeptide linked through a disulfide bond to the mature alpha chain, or of the entire proprotein. Mainly expressed in ovary and testis. Alpha- and beta-B-subunits are the predominant forms found in testis. Also found in placenta, pituitary, adrenal gland, bone marrow, kidney, spinal cord and brain.

The protein localises to the secreted. Its function is as follows. Inhibins and activins inhibit and activate, respectively, the secretion of follitropin by the pituitary gland. Inhibins/activins are involved in regulating a number of diverse functions such as hypothalamic and pituitary hormone secretion, gonadal hormone secretion, germ cell development and maturation, erythroid differentiation, insulin secretion, nerve cell survival, embryonic axial development or bone growth, depending on their subunit composition. Inhibins appear to oppose the functions of activins. In terms of biological role, inhibin A is a dimer of alpha/INHA and beta-A/INHBA that functions as a feedback regulator in the hypothalamic-pituitary-gonadal (HPG) axis. Inhibits the secretion of FSH from the anterior pituitary gland by acting on pituitary gonadotrope cells. Antagonizes activin A by binding to the proteoglycan, betaglycan, and forming a stable complex with and, thereby, sequestering type II activin receptors while excluding type I receptor. Inhibin B is a dimer of alpha and beta-B that plays a crucial role in the regulation of the reproductive system by inhibiting the secretion of follicle-stimulating hormone (FSH) from the anterior pituitary gland. Thereby, maintains reproductive homeostasis in both males and females. Acts as a more potent suppressor of FSH release than inhibin A. Functions as competitive receptor antagonist binding activin type II receptors with high affinity in the presence of the TGF-beta type III coreceptor/TGFBR3L. The polypeptide is Inhibin alpha chain (Inha) (Rattus norvegicus (Rat)).